Reading from the N-terminus, the 570-residue chain is Mitogen-activated protein kinase 11 (570 aa).

In terms of domain architecture, Protein kinase spans Tyr-26–Phe-317. Residues Ile-32–Val-40 and Lys-55 contribute to the ATP site. The active-site Proton acceptor is Asp-152. Thr-188 carries the post-translational modification Phosphothreonine. A TXY motif is present at residues Thr-188–Tyr-190. The residue at position 190 (Tyr-190) is a Phosphotyrosine.

This sequence belongs to the protein kinase superfamily. CMGC Ser/Thr protein kinase family. MAP kinase subfamily. Dually phosphorylated on Thr-188 and Tyr-190, which activates the enzyme.

It carries out the reaction L-seryl-[protein] + ATP = O-phospho-L-seryl-[protein] + ADP + H(+). The catalysed reaction is L-threonyl-[protein] + ATP = O-phospho-L-threonyl-[protein] + ADP + H(+). Activated by threonine and tyrosine phosphorylation. This chain is Mitogen-activated protein kinase 11 (MPK11), found in Oryza sativa subsp. japonica (Rice).